The primary structure comprises 654 residues: Tetratricopeptide repeat protein 30 homolog (654 aa).

TPR repeat units lie at residues 10 to 43 (EGHV…ANTR), 44 to 76 (AGLS…APKE), 143 to 176 (ADTL…GGFN), 178 to 210 (LVAY…GVRN), 384 to 417 (LAAK…YLPV), 449 to 483 (AVWR…HSDD), and 533 to 566 (CIVN…GAGG).

It belongs to the TTC30/dfy-1/fleer family.

Its subcellular location is the cell projection. It localises to the cilium. Required for polyglutamylation of axonemal tubulin in sensory cilia. Plays a role in anterograde intraflagellar transport (IFT), the process by which cilia precursors are transported from the base of the cilium to the site of their incorporation at the tip. The polypeptide is Tetratricopeptide repeat protein 30 homolog (Drosophila pseudoobscura pseudoobscura (Fruit fly)).